Reading from the N-terminus, the 101-residue chain is Putative regulatory protein Csac_2087 (101 aa).

This sequence belongs to the RemA family.

The protein is Putative regulatory protein Csac_2087 of Caldicellulosiruptor saccharolyticus (strain ATCC 43494 / DSM 8903 / Tp8T 6331).